The primary structure comprises 519 residues: Transcription factor STP1 (519 aa).

Residues 16–35 form an i region; it reads IPGKIYAFFRELVSGVIISK. Residues 47-61 are compositionally biased toward basic and acidic residues; the sequence is ATKEEGKDAADEEKT. Disordered regions lie at residues 47–69 and 115–150; these read ATKE…FPES and LLGS…EHST. The interval 65–97 is II; the sequence is LFPESNNIDRSLNGGCSVIPCSMDVSDLNTPIS. The span at 131–146 shows a compositional bias: low complexity; it reads STGVTSSPLSPSGSTP. The segment at 160-182 adopts a C2H2-type 1 zinc-finger fold; sequence FICHYCDATFRIRGYLTRHIKKH. The C2H2-type 2; atypical zinc-finger motif lies at 188 to 223; the sequence is YHCPFFNSATPPDLRCHNSGGFSRRDTYKTHLKARH. The C2H2-type 3; atypical zinc-finger motif lies at 240–265; the sequence is GHCAQCGEYFSTIENFVENHIESGDC. Positions 357–382 are disordered; that stretch reads IKKKQQQVSGSTVTTPEVATQNNQEV. Residues 364-381 show a composition bias toward polar residues; the sequence is VSGSTVTTPEVATQNNQE.

Interacts (via Region II) with SSY5; protease component of the SPS-sensor. In terms of processing, phosphorylated by casein kinase I. Phosphorylation is not dependent on the extracellular amino acid levels, but is a prerequisite for proteolytic processing. Post-translationally, activated by the amino acid-induced proteolytic removal of an N-terminal inhibitory domain by serine protease SSY5, an intrinsic component of the SPS-sensor. Processing requires at least 2 components of the SCF(GRR1) ubiquitin ligase complex, namely the F-box protein GRR1 and the E2 enzyme CDC34, but does not depend on the proteasome. Processing is negatively regulated by the protein phosphatase 2A regulatory subunit RTS1.

The protein localises to the cell membrane. It localises to the nucleus. Functionally, transcription factor involved in the regulation of gene expression in response to extracellular amino acid levels. Synthesized as latent cytoplasmic precursor, which, upon a signal initiated by the plasma membrane SPS (SSY1-PTR3-SSY5) amino acid sensor system, becomes proteolytically activated and relocates to the nucleus, where it induces the expression of SPS-sensor-regulated genes, including the amino-acid permeases AGP1, BAP2, BAP3 and GNP1. Binding to promoters is facilitated by DAL81. Involved in the repression of genes subject to nitrogen catabolite repression and genes involved in stress response. Negatively regulated by inner nuclear membrane proteins ASI1, ASI2 and ASI3, which prevent unprocessed precursor forms that escape cytoplasmic anchoring from inducing SPS-sensor-regulated genes. May be involved in pre-tRNA splicing. The polypeptide is Transcription factor STP1 (STP1) (Saccharomyces cerevisiae (strain RM11-1a) (Baker's yeast)).